Here is a 564-residue protein sequence, read N- to C-terminus: Serine/threonine-protein kinase PknA (564 aa).

One can recognise a Protein kinase domain in the interval 9–271 (YRVIKTLGSG…TAREMLEALQ (263 aa)). ATP-binding positions include 15–23 (LGSGGFGET) and lysine 40. The active-site Proton acceptor is the aspartate 139. Polar residues predominate over residues 360–406 (QPVTQTTSLPSETTISNNDTPTVEPSPTDTPETPISQTVTQDPTPQA). Residues 360–458 (QPVTQTTSLP…PVEATDRPSP (99 aa)) form a disordered region. The segment covering 428-445 (TTEPTTSVPQPTTPSEPQ) has biased composition (low complexity).

Belongs to the protein kinase superfamily. Ser/Thr protein kinase family.

The catalysed reaction is L-seryl-[protein] + ATP = O-phospho-L-seryl-[protein] + ADP + H(+). The enzyme catalyses L-threonyl-[protein] + ATP = O-phospho-L-threonyl-[protein] + ADP + H(+). In terms of biological role, probably required for both normal cellular growth and differentiation. Inactivation of pknA leads to colonies that appear light green and rough in the absence of combined nitrogen. The chain is Serine/threonine-protein kinase PknA (pknA) from Nostoc sp. (strain PCC 7120 / SAG 25.82 / UTEX 2576).